Here is a 322-residue protein sequence, read N- to C-terminus: Undecaprenyl-phosphate 4-deoxy-4-formamido-L-arabinose transferase (322 aa).

The Cytoplasmic portion of the chain corresponds to 1-235; the sequence is MFEIHPVKKV…TCLTTTPLRM (235 aa). Residues 236-256 form a helical membrane-spanning segment; it reads LSLLGSIIAIGGFSIAVLLVI. Topologically, residues 257–269 are periplasmic; that stretch reads LRLTFGPQWAAEG. The chain crosses the membrane as a helical span at residues 270-290; the sequence is VFMLFAVLFTFIGAQFIGMGL. Topologically, residues 291-322 are cytoplasmic; sequence LGEYIGRIYTDVRARPRYFVQQVIRPSSKENE.

Belongs to the glycosyltransferase 2 family.

The protein resides in the cell inner membrane. The enzyme catalyses UDP-4-deoxy-4-formamido-beta-L-arabinose + di-trans,octa-cis-undecaprenyl phosphate = 4-deoxy-4-formamido-alpha-L-arabinopyranosyl di-trans,octa-cis-undecaprenyl phosphate + UDP. The protein operates within glycolipid biosynthesis; 4-amino-4-deoxy-alpha-L-arabinose undecaprenyl phosphate biosynthesis; 4-amino-4-deoxy-alpha-L-arabinose undecaprenyl phosphate from UDP-4-deoxy-4-formamido-beta-L-arabinose and undecaprenyl phosphate: step 1/2. It functions in the pathway bacterial outer membrane biogenesis; lipopolysaccharide biosynthesis. Catalyzes the transfer of 4-deoxy-4-formamido-L-arabinose from UDP to undecaprenyl phosphate. The modified arabinose is attached to lipid A and is required for resistance to polymyxin and cationic antimicrobial peptides. The polypeptide is Undecaprenyl-phosphate 4-deoxy-4-formamido-L-arabinose transferase (Escherichia coli O157:H7 (strain EC4115 / EHEC)).